A 263-amino-acid chain; its full sequence is Proteasome subunit alpha type-1 (263 aa).

M1 carries the post-translational modification N-acetylmethionine. At S110 the chain carries Phosphoserine; alternate. O-linked (GlcNAc) serine; alternate glycosylation occurs at S110. K115 is covalently cross-linked (Glycyl lysine isopeptide (Lys-Gly) (interchain with G-Cter in ubiquitin)). Phosphoserine is present on S177. K208 is covalently cross-linked (Glycyl lysine isopeptide (Lys-Gly) (interchain with G-Cter in ubiquitin)). The segment at 232-263 (FLDGLEERPQRKAQPSQAAEEPAEKADEPMEH) is disordered. Positions 253–263 (PAEKADEPMEH) are enriched in basic and acidic residues.

This sequence belongs to the peptidase T1A family. In terms of assembly, the 26S proteasome consists of a 20S proteasome core and two 19S regulatory subunits. The 20S proteasome core is a barrel-shaped complex made of 28 subunits that are arranged in four stacked rings. The two outer rings are each formed by seven alpha subunits, and the two inner rings are formed by seven beta subunits. The proteolytic activity is exerted by three beta-subunits PSMB5, PSMB6 and PSMB7. Interacts with NOTCH3. Interacts with ZFAND1. C-terminal extension is partially cleaved off by limited proteolysis leading to a conversion of the proteasome from its latent into its active form. As to expression, detected in liver (at protein level).

The protein localises to the cytoplasm. Its subcellular location is the nucleus. In terms of biological role, component of the 20S core proteasome complex involved in the proteolytic degradation of most intracellular proteins. This complex plays numerous essential roles within the cell by associating with different regulatory particles. Associated with two 19S regulatory particles, forms the 26S proteasome and thus participates in the ATP-dependent degradation of ubiquitinated proteins. The 26S proteasome plays a key role in the maintenance of protein homeostasis by removing misfolded or damaged proteins that could impair cellular functions, and by removing proteins whose functions are no longer required. Associated with the PA200 or PA28, the 20S proteasome mediates ubiquitin-independent protein degradation. This type of proteolysis is required in several pathways including spermatogenesis (20S-PA200 complex) or generation of a subset of MHC class I-presented antigenic peptides (20S-PA28 complex). This is Proteasome subunit alpha type-1 (Psma1) from Mus musculus (Mouse).